We begin with the raw amino-acid sequence, 322 residues long: Acetyl-coenzyme A carboxylase carboxyl transferase subunit alpha (322 aa).

The region spanning 39 to 293 (RLASKSQQLT…KRALAESLRQ (255 aa)) is the CoA carboxyltransferase C-terminal domain.

It belongs to the AccA family. In terms of assembly, acetyl-CoA carboxylase is a heterohexamer composed of biotin carboxyl carrier protein (AccB), biotin carboxylase (AccC) and two subunits each of ACCase subunit alpha (AccA) and ACCase subunit beta (AccD).

It is found in the cytoplasm. The catalysed reaction is N(6)-carboxybiotinyl-L-lysyl-[protein] + acetyl-CoA = N(6)-biotinyl-L-lysyl-[protein] + malonyl-CoA. It participates in lipid metabolism; malonyl-CoA biosynthesis; malonyl-CoA from acetyl-CoA: step 1/1. Its function is as follows. Component of the acetyl coenzyme A carboxylase (ACC) complex. First, biotin carboxylase catalyzes the carboxylation of biotin on its carrier protein (BCCP) and then the CO(2) group is transferred by the carboxyltransferase to acetyl-CoA to form malonyl-CoA. This Ralstonia pickettii (strain 12J) protein is Acetyl-coenzyme A carboxylase carboxyl transferase subunit alpha.